A 142-amino-acid chain; its full sequence is MFRNIQKRNISSSGRVLLNHGKPQNPVYNAELTMKIEPIQRTGESIDVKRARLVYQSRKRGILESDLLLSRFAKRYLSGFSQEELDEYDKLLDEPDWDIYYWATKNYDVTPLPDKWKNSKILKLLQEDAENKEKEILRMPEL.

The protein belongs to the SDHAF2 family. In terms of assembly, interacts with the flavoprotein subunit within the SDH catalytic dimer.

The protein localises to the mitochondrion matrix. Functionally, plays an essential role in the assembly of succinate dehydrogenase (SDH), an enzyme complex (also referred to as respiratory complex II) that is a component of both the tricarboxylic acid (TCA) cycle and the mitochondrial electron transport chain, and which couples the oxidation of succinate to fumarate with the reduction of ubiquinone (coenzyme Q) to ubiquinol. Required for flavinylation (covalent attachment of FAD) of the flavoprotein subunit of the SDH catalytic dimer. The polypeptide is Succinate dehydrogenase assembly factor 2, mitochondrial (Debaryomyces hansenii (strain ATCC 36239 / CBS 767 / BCRC 21394 / JCM 1990 / NBRC 0083 / IGC 2968) (Yeast)).